Consider the following 338-residue polypeptide: Formimidoylglutamase (338 aa).

His137, Asp166, His168, Asp170, Cys259, and Asp261 together coordinate Mn(2+).

Belongs to the arginase family. It depends on Mn(2+) as a cofactor.

The enzyme catalyses N-formimidoyl-L-glutamate + H2O = formamide + L-glutamate. Its pathway is amino-acid degradation; L-histidine degradation into L-glutamate; L-glutamate from N-formimidoyl-L-glutamate (hydrolase route): step 1/1. Functionally, catalyzes the conversion of N-formimidoyl-L-glutamate to L-glutamate and formamide. The polypeptide is Formimidoylglutamase (Clostridium tetani (strain Massachusetts / E88)).